The sequence spans 457 residues: Prenyltransferase ucdE (457 aa).

Residues R106, K198, K277, Y279, Y382, Y447, and Y451 each contribute to the dimethylallyl diphosphate site.

The protein belongs to the tryptophan dimethylallyltransferase family.

The protein operates within secondary metabolite biosynthesis. Nonribosomal peptide synthetase that mediates the biosynthesis of usterphenyllins and uscandidusins, p-terphenyl derivatives. Within the pathway, ucdE prenylates position C-5 of ring A of 3,15-dihydroxyterphenyllin to produce forms usterphenyllin B. UcdE further prenylates position C-14 of ring C of usterphenyllin B to form usterphenyllin A. The pathway begin with the biosynthesis of 4-hydroxyphenylpyruvate (HPPA) from L-tyrosine, possibly by the aminotransferase ucdG. The nonribosomal peptide synthetase ucdA then condenses two HPPA units to produce atromentin. The key step in this pathway is the reduction and dehydration of atromentin to form a terphenyl triol intermediate, performed by the NAD-dependent dehydrogenase ucdB. Further O-methylation by the methyltransferase ucdC forms terphenyllin carrying two methoxy moieties at C-9 and C-12, and subsequent dihydroxylation at C-3 of ring A and C-15 of ring C by the flavin-dependent oxygenase ucdD leads to 3,15-dihydroxyterphenyllin. Prenylation by ucdE at position C-5 of ring A forms usterphenyllin B, and is followed by a second prenylation at position C-14 of ring C to form usterphenyllin A. The following furan ring formation that leads to uscandidusins A and B was proven to be an unexpected spontaneous non-enzymatic reaction. This Aspergillus ustus protein is Prenyltransferase ucdE.